Here is a 121-residue protein sequence, read N- to C-terminus: Large ribosomal subunit protein eL8 (121 aa).

This sequence belongs to the eukaryotic ribosomal protein eL8 family. Part of the 50S ribosomal subunit. Probably part of the RNase P complex.

Its subcellular location is the cytoplasm. Multifunctional RNA-binding protein that recognizes the K-turn motif in ribosomal RNA, the RNA component of RNase P, box H/ACA, box C/D and box C'/D' sRNAs. The sequence is that of Large ribosomal subunit protein eL8 from Thermoplasma volcanium (strain ATCC 51530 / DSM 4299 / JCM 9571 / NBRC 15438 / GSS1).